A 754-amino-acid chain; its full sequence is 1,4-alpha-glucan branching enzyme GlgB (754 aa).

Catalysis depends on Asp-431, which acts as the Nucleophile. Glu-484 acts as the Proton donor in catalysis.

It belongs to the glycosyl hydrolase 13 family. GlgB subfamily. In terms of assembly, monomer.

It carries out the reaction Transfers a segment of a (1-&gt;4)-alpha-D-glucan chain to a primary hydroxy group in a similar glucan chain.. It functions in the pathway glycan biosynthesis; glycogen biosynthesis. In terms of biological role, catalyzes the formation of the alpha-1,6-glucosidic linkages in glycogen by scission of a 1,4-alpha-linked oligosaccharide from growing alpha-1,4-glucan chains and the subsequent attachment of the oligosaccharide to the alpha-1,6 position. The protein is 1,4-alpha-glucan branching enzyme GlgB of Prochlorococcus marinus (strain MIT 9515).